We begin with the raw amino-acid sequence, 110 residues long: MTQFSALALLLIVFVAASFAQSYDDVSAEKRAMRNALVRFGRASGGMRNALVRFGKRSPLDEEDFAPESPLQGKRNGAPQPFVRFGRSGQLDHMHDLLSTLQKLKFANNK.

The first 22 residues, 1–22 (MTQFSALALLLIVFVAASFAQS), serve as a signal peptide directing secretion. A propeptide spanning residues 23–29 (YDDVSAE) is cleaved from the precursor. Residues F40 and F54 each carry the phenylalanine amide modification. Residues 60-85 (LDEEDFAPESPLQGKRNGAPQPFVRF) form a disordered region. Q72 is subject to Glutamine amide. Phenylalanine amide is present on F85. Positions 88–110 (SGQLDHMHDLLSTLQKLKFANNK) are excised as a propeptide.

It belongs to the FARP (FMRFamide related peptide) family. In terms of tissue distribution, each flp gene is expressed in a distinct set of neurons. Flp-11 is expressed in the DD, VD and DVB motor neurons, the PVC and URX interneurons, and the AUA, BAG, DA, LUA, and SAB neurons. Also expressed in head muscle, socket or sheath cells and uterine cells. Expressed exclusively in PHC sensory neurons in males. Expressed in AVK and RIS interneurons.

Its subcellular location is the secreted. Functionally, FMRFamides and FMRFamide-like peptides are neuropeptides. Induces sleep-like quiescence behavior following release from RIS interneuron. Helps to sustain locomotion stop after gamma-aminobutyric acid (GABA) induces fast slowing response. Inhibits the late-stage body bend swimming frequency in animals through several receptors including frpr-3, npr-4 and npr-22. Its function is as follows. Potent inhibitor of the activity of the dissected pharyngeal myogenic muscle system. Acts as a ligand for the npr-22 receptor in vitro. In terms of biological role, acts as a ligand for the npr-22 receptor in vitro. This chain is FMRFamide-like neuropeptides 11, found in Caenorhabditis elegans.